A 491-amino-acid polypeptide reads, in one-letter code: Cytochrome P450 monooxygenase 521A1 (491 aa).

The helical transmembrane segment at 1-21 (MILLTLLYLIIFYIIIDFIKK) threads the bilayer. Residue C438 coordinates heme.

The protein belongs to the cytochrome P450 family. Heme serves as cofactor.

The protein localises to the membrane. The enzyme catalyses discoidol + reduced [NADPH--hemoprotein reductase] + O2 = discodiene + acetone + oxidized [NADPH--hemoprotein reductase] + 2 H2O + H(+). The protein operates within sesquiterpene biosynthesis. Its function is as follows. Cytochrome P450 monooxygenase; part of the gene cluster that mediates the biosynthesis of the trisnorsesquiterpene discodiene which has a function during later stages of multicellular development, during the transition from fingers to Mexican hats. The terpene synthase tps8 converts its substrate farnesyl diphosphate (FDP) into the bicyclic sesquiterpene alcohol discoidol. The cytochrome P450 monooxygenase cyp521A1 then catalyzes the oxidative degradation of discoidol to form the trisnorsesquiterpene discodiene. This Dictyostelium discoideum (Social amoeba) protein is Cytochrome P450 monooxygenase 521A1 (cyp521A1).